Consider the following 270-residue polypeptide: Cerberus (270 aa).

Residues Met1–Gly20 form the signal peptide. N-linked (GlcNAc...) asparagine glycosylation is found at Asn103, Asn112, and Asn154. Intrachain disulfides connect Cys169–Cys215, Cys183–Cys229, Cys193–Cys245, and Cys197–Cys247. A CTCK domain is found at Cys169–Asn253. The N-linked (GlcNAc...) asparagine glycan is linked to Asn228.

This sequence belongs to the DAN family. In terms of assembly, the long chain interacts with nodal/nr-1, bmp4 and wnt8, thereby inhibiting their function. The short chain interacts with nodal/nr-1 but not bmp4 or wnt8. In terms of tissue distribution, a component of the Nieuwkoop signaling center in the blastula. Expressed transiently in a broad anterior domain of the gastrula, including the anterior endoderm of the Spemann's organizer and more laterally the cardiac primordia. Expression is excluded from the prospective prechordal plate region and the ring of cells that give rise to the trunk-tail mesoderm.

Its subcellular location is the secreted. Inhibits wnt, nodal/nr-1 and bmp signaling in the embryo to promote head formation and anterior neural induction. Within the endoderm, acts as an essential mediator of nodal/nr-1-induced cardiogenesis in the overlying mesoderm. The protein is Cerberus of Xenopus laevis (African clawed frog).